The primary structure comprises 612 residues: Dihydroxy-acid dehydratase (612 aa).

Residue aspartate 81 coordinates Mg(2+). Cysteine 122 contacts [2Fe-2S] cluster. Residues aspartate 123 and lysine 124 each coordinate Mg(2+). Residue lysine 124 is modified to N6-carboxylysine. Cysteine 193 is a binding site for [2Fe-2S] cluster. Glutamate 489 is a Mg(2+) binding site. Residue serine 515 is the Proton acceptor of the active site.

The protein belongs to the IlvD/Edd family. As to quaternary structure, homodimer. [2Fe-2S] cluster is required as a cofactor. The cofactor is Mg(2+).

It catalyses the reaction (2R)-2,3-dihydroxy-3-methylbutanoate = 3-methyl-2-oxobutanoate + H2O. The catalysed reaction is (2R,3R)-2,3-dihydroxy-3-methylpentanoate = (S)-3-methyl-2-oxopentanoate + H2O. Its pathway is amino-acid biosynthesis; L-isoleucine biosynthesis; L-isoleucine from 2-oxobutanoate: step 3/4. It functions in the pathway amino-acid biosynthesis; L-valine biosynthesis; L-valine from pyruvate: step 3/4. Functionally, functions in the biosynthesis of branched-chain amino acids. Catalyzes the dehydration of (2R,3R)-2,3-dihydroxy-3-methylpentanoate (2,3-dihydroxy-3-methylvalerate) into 2-oxo-3-methylpentanoate (2-oxo-3-methylvalerate) and of (2R)-2,3-dihydroxy-3-methylbutanoate (2,3-dihydroxyisovalerate) into 2-oxo-3-methylbutanoate (2-oxoisovalerate), the penultimate precursor to L-isoleucine and L-valine, respectively. This is Dihydroxy-acid dehydratase from Xanthomonas campestris pv. campestris (strain B100).